The following is a 446-amino-acid chain: N-succinylarginine dihydrolase (446 aa).

Residues 19 to 28 (AGLSFGNEAS), N110, and 137 to 138 (HR) each bind substrate. E174 is an active-site residue. R213 provides a ligand contact to substrate. Residue H249 is part of the active site. Substrate contacts are provided by D251 and N364. C370 serves as the catalytic Nucleophile.

It belongs to the succinylarginine dihydrolase family. In terms of assembly, homodimer.

The catalysed reaction is N(2)-succinyl-L-arginine + 2 H2O + 2 H(+) = N(2)-succinyl-L-ornithine + 2 NH4(+) + CO2. The protein operates within amino-acid degradation; L-arginine degradation via AST pathway; L-glutamate and succinate from L-arginine: step 2/5. Its function is as follows. Catalyzes the hydrolysis of N(2)-succinylarginine into N(2)-succinylornithine, ammonia and CO(2). The protein is N-succinylarginine dihydrolase of Acinetobacter baylyi (strain ATCC 33305 / BD413 / ADP1).